Reading from the N-terminus, the 344-residue chain is Probable pectinesterase 67 (344 aa).

The signal sequence occupies residues 1–23; it reads MGHRTRMILVLTLVVMSIWGSDA. N-linked (GlcNAc...) asparagine glycosylation is found at Asn43 and Asn151. Residue Gln152 participates in substrate binding. Residue Asp196 is the Nucleophile of the active site. Arg256 is a substrate binding site. N-linked (GlcNAc...) asparagine glycosylation occurs at Asn282.

The protein belongs to the pectinesterase family. As to expression, expressed in flower buds.

Its subcellular location is the secreted. It localises to the cell wall. It carries out the reaction [(1-&gt;4)-alpha-D-galacturonosyl methyl ester](n) + n H2O = [(1-&gt;4)-alpha-D-galacturonosyl](n) + n methanol + n H(+). It functions in the pathway glycan metabolism; pectin degradation; 2-dehydro-3-deoxy-D-gluconate from pectin: step 1/5. Its function is as follows. Acts in the modification of cell walls via demethylesterification of cell wall pectin. This chain is Probable pectinesterase 67 (PME67), found in Arabidopsis thaliana (Mouse-ear cress).